A 987-amino-acid chain; its full sequence is Pro-apoptotic serine protease NMA111 (987 aa).

The tract at residues 1–29 (MPDIPTKRRLSNGSVIDNTNKRQMQSSFV) is disordered. Over residues 11–28 (SNGSVIDNTNKRQMQSSF) the composition is skewed to polar residues. A serine protease region spans residues 69 to 262 (VKSVVSIQFT…LPVYRPLRAL (194 aa)). Catalysis depends on charge relay system residues His110, Asp141, and Ser224. 2 PDZ domains span residues 279–364 (EWSL…VVIQ) and 878–950 (PHHG…VSFD).

The protein belongs to the peptidase S1C family.

The protein localises to the nucleus. Nuclear serine protease which mediates apoptosis. This chain is Pro-apoptotic serine protease NMA111 (NMA111), found in Debaryomyces hansenii (strain ATCC 36239 / CBS 767 / BCRC 21394 / JCM 1990 / NBRC 0083 / IGC 2968) (Yeast).